The primary structure comprises 213 residues: Sclerostin (213 aa).

Residues 1-23 (MQLPLALCLVCLLVHTAFRVVEG) form the signal peptide. The interval 41 to 71 (GEYPEPPPELENNKTMNRAENGGRPPHHPFE) is disordered. Asn53 carries an N-linked (GlcNAc...) asparagine glycan. 4 disulfides stabilise this stretch: Cys80–Cys134, Cys94–Cys148, Cys105–Cys165, and Cys109–Cys167. A CTCK domain is found at 82 to 172 (ELHFTRYVTD…ASCKCKRLTR (91 aa)). N-linked (GlcNAc...) asparagine glycosylation is present at Asn175. The segment at 178-213 (ELKDFGTEAARPQKGRKPRPRARSAKANQAELENAY) is disordered. Residues 190–201 (QKGRKPRPRARS) are compositionally biased toward basic residues.

This sequence belongs to the sclerostin family. As to quaternary structure, interacts with LRP4 (via the extracellular domain); the interaction facilitates the inhibition of Wnt signaling. Interacts with LRP5 (via the first two YWTD-EGF repeat domains); the interaction inhibits Wnt-mediated signaling. Interacts with LRP6. In terms of tissue distribution, widely expressed at low levels with highest levels in bone, cartilage, kidney, liver, bone marrow and primary osteoblasts differentiated for 21 days. Detected in the subendothelial layer of the aortic intima (at protein level).

It localises to the secreted. The protein resides in the extracellular space. It is found in the extracellular matrix. Functionally, negative regulator of bone growth that acts through inhibition of Wnt signaling and bone formation. The polypeptide is Sclerostin (Homo sapiens (Human)).